A 235-amino-acid chain; its full sequence is Small ribosomal subunit protein uS3 (235 aa).

Positions 39-107 constitute a KH type-2 domain; that stretch reads VRKFLNKELA…PAQINIAEVK (69 aa). A disordered region spans residues 215-235; it reads AQSEQQPADKPKKAPRGKGRK.

The protein belongs to the universal ribosomal protein uS3 family. As to quaternary structure, part of the 30S ribosomal subunit. Forms a tight complex with proteins S10 and S14.

In terms of biological role, binds the lower part of the 30S subunit head. Binds mRNA in the 70S ribosome, positioning it for translation. The protein is Small ribosomal subunit protein uS3 of Haemophilus influenzae (strain ATCC 51907 / DSM 11121 / KW20 / Rd).